The following is a 223-amino-acid chain: Endonuclease NucS (223 aa).

The protein belongs to the NucS endonuclease family.

Its subcellular location is the cytoplasm. In terms of biological role, cleaves both 3' and 5' ssDNA extremities of branched DNA structures. The sequence is that of Endonuclease NucS from Streptomyces coelicolor (strain ATCC BAA-471 / A3(2) / M145).